Consider the following 213-residue polypeptide: Ribonuclease HII (213 aa).

In terms of domain architecture, RNase H type-2 spans Met-1–Gln-206. A divalent metal cation is bound by residues Asp-6, Glu-7, and Asp-101.

The protein belongs to the RNase HII family. The cofactor is Mn(2+). It depends on Mg(2+) as a cofactor.

It is found in the cytoplasm. The enzyme catalyses Endonucleolytic cleavage to 5'-phosphomonoester.. Endonuclease that specifically degrades the RNA of RNA-DNA hybrids. This Methanoregula boonei (strain DSM 21154 / JCM 14090 / 6A8) protein is Ribonuclease HII.